The primary structure comprises 117 residues: Large ribosomal subunit protein eL34 (117 aa).

Ser-12 is subject to Phosphoserine. The segment covering 16–28 has biased composition (polar residues); the sequence is ASNKTRLSRTPGQ. The disordered stretch occupies residues 16 to 35; the sequence is ASNKTRLSRTPGQQDRLPLH. Lys-108 is covalently cross-linked (Glycyl lysine isopeptide (Lys-Gly) (interchain with G-Cter in SUMO2)).

Belongs to the eukaryotic ribosomal protein eL34 family. Component of the large ribosomal subunit.

It is found in the cytoplasm. The protein resides in the cytosol. Its subcellular location is the endoplasmic reticulum. Component of the large ribosomal subunit. The ribosome is a large ribonucleoprotein complex responsible for the synthesis of proteins in the cell. This chain is Large ribosomal subunit protein eL34 (RPL34), found in Vicugna pacos (Alpaca).